Here is a 589-residue protein sequence, read N- to C-terminus: Arylsulfatase L (589 aa).

The N-terminal stretch at 1–31 is a signal peptide; the sequence is MLHLHHSCLCFRSWLPAMLAVLLSLAPSASS. Ca(2+)-binding residues include Asp46 and Asp47. Asn58 carries N-linked (GlcNAc...) asparagine glycosylation. Cys86 contributes to the Ca(2+) binding site. Cys86 serves as the catalytic Nucleophile. Position 86 is a 3-oxoalanine (Cys) (Cys86). Residue Asn125 is glycosylated (N-linked (GlcNAc...) asparagine). Residue Lys145 coordinates substrate. The active site involves His147. Asn258 is a glycosylation site (N-linked (GlcNAc...) asparagine). His301 is a binding site for substrate. Asn344 carries an N-linked (GlcNAc...) asparagine glycan. The Ca(2+) site is built by Asp353 and His354. Lys378 is a binding site for substrate.

This sequence belongs to the sulfatase family. Ca(2+) serves as cofactor. In terms of processing, N-glycosylated. The conversion to 3-oxoalanine (also known as C-formylglycine, FGly), of a serine or cysteine residue in prokaryotes and of a cysteine residue in eukaryotes, is critical for catalytic activity. In terms of tissue distribution, expressed in the pancreas, liver and kidney.

It localises to the golgi apparatus. The protein localises to the golgi stack. It catalyses the reaction an aryl sulfate + H2O = a phenol + sulfate + H(+). With respect to regulation, inhibited by millimolar concentrations of warfarin. Functionally, exhibits arylsulfatase activity towards the artificial substrate 4-methylumbelliferyl sulfate. May be essential for the correct composition of cartilage and bone matrix during development. Has no activity toward steroid sulfates. The chain is Arylsulfatase L from Homo sapiens (Human).